The sequence spans 414 residues: DNA polymerase IV (414 aa).

Residues 8-189 enclose the UmuC domain; that stretch reads IFHIDMNSFY…LPIEEMHGIG (182 aa). Residues D12 and D108 each coordinate Mg(2+). E109 is an active-site residue. The disordered stretch occupies residues 394 to 414; it reads EESKTRGTSFNRDFFQDEKKR.

The protein belongs to the DNA polymerase type-Y family. Monomer. Mg(2+) serves as cofactor.

It is found in the cytoplasm. The enzyme catalyses DNA(n) + a 2'-deoxyribonucleoside 5'-triphosphate = DNA(n+1) + diphosphate. In terms of biological role, poorly processive, error-prone DNA polymerase involved in untargeted mutagenesis. Copies undamaged DNA at stalled replication forks, which arise in vivo from mismatched or misaligned primer ends. These misaligned primers can be extended by PolIV. Exhibits no 3'-5' exonuclease (proofreading) activity. May be involved in translesional synthesis, in conjunction with the beta clamp from PolIII. This chain is DNA polymerase IV, found in Bacillus velezensis (strain DSM 23117 / BGSC 10A6 / LMG 26770 / FZB42) (Bacillus amyloliquefaciens subsp. plantarum).